Consider the following 503-residue polypeptide: Glutamyl-tRNA(Gln) amidotransferase subunit A (503 aa).

Residues K79 and S154 each act as charge relay system in the active site. The Acyl-ester intermediate role is filled by S178.

This sequence belongs to the amidase family. GatA subfamily. In terms of assembly, heterotrimer of A, B and C subunits.

It catalyses the reaction L-glutamyl-tRNA(Gln) + L-glutamine + ATP + H2O = L-glutaminyl-tRNA(Gln) + L-glutamate + ADP + phosphate + H(+). In terms of biological role, allows the formation of correctly charged Gln-tRNA(Gln) through the transamidation of misacylated Glu-tRNA(Gln) in organisms which lack glutaminyl-tRNA synthetase. The reaction takes place in the presence of glutamine and ATP through an activated gamma-phospho-Glu-tRNA(Gln). This Agathobacter rectalis (strain ATCC 33656 / DSM 3377 / JCM 17463 / KCTC 5835 / VPI 0990) (Eubacterium rectale) protein is Glutamyl-tRNA(Gln) amidotransferase subunit A.